The following is a 251-amino-acid chain: Triosephosphate isomerase (251 aa).

12-14 is a binding site for substrate; it reads NWK. Residue His-98 is the Electrophile of the active site. Residue Glu-168 is the Proton acceptor of the active site. Substrate-binding positions include Gly-174, Ser-213, and 234–235; that span reads GG.

It belongs to the triosephosphate isomerase family. As to quaternary structure, homodimer.

The protein localises to the cytoplasm. The enzyme catalyses D-glyceraldehyde 3-phosphate = dihydroxyacetone phosphate. The protein operates within carbohydrate biosynthesis; gluconeogenesis. It functions in the pathway carbohydrate degradation; glycolysis; D-glyceraldehyde 3-phosphate from glycerone phosphate: step 1/1. Involved in the gluconeogenesis. Catalyzes stereospecifically the conversion of dihydroxyacetone phosphate (DHAP) to D-glyceraldehyde-3-phosphate (G3P). This chain is Triosephosphate isomerase, found in Bradyrhizobium diazoefficiens (strain JCM 10833 / BCRC 13528 / IAM 13628 / NBRC 14792 / USDA 110).